Here is a 447-residue protein sequence, read N- to C-terminus: Tol-Pal system protein TolB (447 aa).

The signal sequence occupies residues 1 to 29; the sequence is MITMSRIRSLAAFAVFVILGVAAVLPAQA.

The protein belongs to the TolB family. As to quaternary structure, the Tol-Pal system is composed of five core proteins: the inner membrane proteins TolA, TolQ and TolR, the periplasmic protein TolB and the outer membrane protein Pal. They form a network linking the inner and outer membranes and the peptidoglycan layer.

The protein localises to the periplasm. Its function is as follows. Part of the Tol-Pal system, which plays a role in outer membrane invagination during cell division and is important for maintaining outer membrane integrity. The protein is Tol-Pal system protein TolB of Paramagnetospirillum magneticum (strain ATCC 700264 / AMB-1) (Magnetospirillum magneticum).